Reading from the N-terminus, the 225-residue chain is Small ribosomal subunit protein L51-b (225 aa).

Residues 1-84 constitute a mitochondrion transit peptide; the sequence is MKFPDLLRCS…QCAFISSDRF (84 aa).

It belongs to the bacterial ribosomal protein bS1 family. As to quaternary structure, component of the mitochondrial small ribosomal subunit (mt-SSU). Mature yeast 74S mitochondrial ribosomes consist of a small (37S) and a large (54S) subunit. The 37S small subunit contains a 15S ribosomal RNA (15S mt-rRNA) and at least 32 different proteins. The 54S large subunit contains a 21S rRNA (21S mt-rRNA) and at least 45 different proteins. This subunit is mutually exclusive with mrp51/small ribosomal subunit protein bS1m.

It is found in the mitochondrion. Functionally, component of the mitochondrial ribosome (mitoribosome), a dedicated translation machinery responsible for the synthesis of mitochondrial genome-encoded proteins, including at least some of the essential transmembrane subunits of the mitochondrial respiratory chain. The mitoribosomes are attached to the mitochondrial inner membrane and translation products are cotranslationally integrated into the membrane. Functionally interacts with the 5'-UTR of mitochondrial mRNAs. Specifically plays a role in the translation of cob1/cytochrome b and cox3. Has a role in meiosis. The sequence is that of Small ribosomal subunit protein L51-b from Schizosaccharomyces pombe (strain 972 / ATCC 24843) (Fission yeast).